The following is a 310-amino-acid chain: Iron ABC transporter substrate-binding lipoprotein MtsA (310 aa).

A signal peptide spans 1–20 (MGKRMSLILGAFLSVFLLVA). Cys-21 carries N-palmitoyl cysteine lipidation. The S-diacylglycerol cysteine moiety is linked to residue Cys-21. Fe(2+) is bound by residues His-68, His-140, Glu-206, and Asp-281.

This sequence belongs to the bacterial solute-binding protein 9 family. Lipoprotein receptor antigen (Lrai) subfamily.

The protein localises to the cell membrane. Its function is as follows. Part of the ATP-binding cassette (ABC) transport system MtsABC involved in iron import. Binds iron with high affinity and specificity and delivers it to the membrane permease for translocation into the cytoplasm. Has low affinity for Zn(2+) and Cu(2+). In Streptococcus pyogenes serotype M1, this protein is Iron ABC transporter substrate-binding lipoprotein MtsA (mtsA).